The sequence spans 254 residues: MENIMNNPVIGVVMCRNRLKGHATQTLQEKYLNAIIHAGGLPIALPHALAEPSLLEQLLPKLDGIYLPGSPSNVQPHLYGENGDEPDADPGRDLLSMAIINAALERRIPIFAICRGLQELVVATGGSLHRKLCEQPELLEHREDPELPVEQQYAPSHEVQVEEGGLLSALLPECSNFWVNSLHGQGAKVVSPRLRVEARSPDGLVEAVSVINHPFALGVQWHPEWNSSEYALSRILFEGFITACQHHIAEKQRL.

The Glutamine amidotransferase type-1 domain maps to 16–250 (RNRLKGHATQ…ITACQHHIAE (235 aa)). The Nucleophile role is filled by C114. Residues H222 and E224 contribute to the active site.

The protein belongs to the peptidase C26 family. As to quaternary structure, homodimer.

It catalyses the reaction 4-(gamma-L-glutamylamino)butanoate + H2O = 4-aminobutanoate + L-glutamate. The protein operates within amine and polyamine degradation; putrescine degradation; 4-aminobutanoate from putrescine: step 4/4. Its function is as follows. Involved in the breakdown of putrescine via hydrolysis of the gamma-glutamyl linkage of gamma-glutamyl-gamma-aminobutyrate. In Escherichia coli (strain K12), this protein is Gamma-glutamyl-gamma-aminobutyrate hydrolase PuuD (puuD).